A 497-amino-acid polypeptide reads, in one-letter code: Acetyltransferase adrJ (497 aa).

Active-site proton acceptor residues include His174 and Asp422. Residues 430 to 451 form a disordered region; the sequence is SSAQSSSQNTQKKGKPSYVNGV.

The protein belongs to the plant acyltransferase family. As to quaternary structure, monomer.

It functions in the pathway secondary metabolite biosynthesis; terpenoid biosynthesis. In terms of biological role, acetyltransferase; part of the gene cluster that mediates the biosynthesis of andrastins, meroterpenoid compounds that exhibit inhibitory activity against ras farnesyltransferase, suggesting that they could be promising leads for antitumor agents. The first step of the pathway is the synthesis of 3,5-dimethylorsellinic acid (DMOA) by the polyketide synthase adrD via condensation of one acetyl-CoA starter unit with 3 malonyl-CoA units and 2 methylations. DMAO is then converted to farnesyl-DMAO by the prenyltransferase adrG. The methyltransferase adrK catalyzes the methylation of the carboxyl group of farnesyl-DMAO to farnesyl-DMAO methyl ester which is further converted to epoxyfarnesyl-DMAO methyl ester by the FAD-dependent monooxygenase adrH. The terpene cyclase adrI then catalyzes the carbon skeletal rearrangement to generate the andrastin E, the first compound in the pathway having the andrastin scaffold, with the tetracyclic ring system. The post-cyclization tailoring enzymes adrF, adrE, adrJ, and adrA, are involved in the conversion of andrastin E into andrastin A. The short chain dehydrogenase adrF is responsible for the oxidation of the C-3 a hydroxyl group of andrastin E to yield the corresponding ketone, andrastin D. The ketoreductase adrE stereoselectively reduces the carbonyl moiety to reverse the stereochemistry of the C-3 position to yield andrastin F. The acetyltransferase adrJ is the acetyltransferase that attaches the acetyl group to the C-3 hydroxyl group of andrastin F to yield andrastin C. Finally, the cytochrome P450 monooxygenase adrA catalyzes two sequential oxidation reactions of the C-23 methyl group, to generate the corresponding alcohol andrastin B, and aldehyde andrastin A. In Penicillium rubens (strain ATCC 28089 / DSM 1075 / NRRL 1951 / Wisconsin 54-1255) (Penicillium chrysogenum), this protein is Acetyltransferase adrJ.